Here is a 165-residue protein sequence, read N- to C-terminus: MSLLINSTTLGNIIITLGSVFLLYYLIRKFAWDQITGIFVAREKKIATDIDSAENARQEAEILVQKRQEELAAARTEATQIIDEAKKTGKTKESKIIAEAYDEAKRLKEKANQDIAQSWVEALAGVKGEVADLTVLLAEKVMKQNLDAKAQSDLIDSYLDQLGDA.

The chain crosses the membrane as a helical span at residues 5–27 (INSTTLGNIIITLGSVFLLYYLI).

It belongs to the ATPase B chain family. F-type ATPases have 2 components, F(1) - the catalytic core - and F(0) - the membrane proton channel. F(1) has five subunits: alpha(3), beta(3), gamma(1), delta(1), epsilon(1). F(0) has three main subunits: a(1), b(2) and c(10-14). The alpha and beta chains form an alternating ring which encloses part of the gamma chain. F(1) is attached to F(0) by a central stalk formed by the gamma and epsilon chains, while a peripheral stalk is formed by the delta and b chains.

The protein resides in the cell membrane. F(1)F(0) ATP synthase produces ATP from ADP in the presence of a proton or sodium gradient. F-type ATPases consist of two structural domains, F(1) containing the extramembraneous catalytic core and F(0) containing the membrane proton channel, linked together by a central stalk and a peripheral stalk. During catalysis, ATP synthesis in the catalytic domain of F(1) is coupled via a rotary mechanism of the central stalk subunits to proton translocation. Functionally, component of the F(0) channel, it forms part of the peripheral stalk, linking F(1) to F(0). This chain is ATP synthase subunit b, found in Streptococcus thermophilus (strain CNRZ 1066).